A 417-amino-acid polypeptide reads, in one-letter code: Gamma-glutamyl phosphate reductase (417 aa).

The protein belongs to the gamma-glutamyl phosphate reductase family.

It localises to the cytoplasm. The enzyme catalyses L-glutamate 5-semialdehyde + phosphate + NADP(+) = L-glutamyl 5-phosphate + NADPH + H(+). The protein operates within amino-acid biosynthesis; L-proline biosynthesis; L-glutamate 5-semialdehyde from L-glutamate: step 2/2. Its function is as follows. Catalyzes the NADPH-dependent reduction of L-glutamate 5-phosphate into L-glutamate 5-semialdehyde and phosphate. The product spontaneously undergoes cyclization to form 1-pyrroline-5-carboxylate. The chain is Gamma-glutamyl phosphate reductase from Phocaeicola vulgatus (strain ATCC 8482 / DSM 1447 / JCM 5826 / CCUG 4940 / NBRC 14291 / NCTC 11154) (Bacteroides vulgatus).